We begin with the raw amino-acid sequence, 206 residues long: MGRYTGPTCRLCRREGMKLYLKGDKCYTDKCPFARRGYAPGQHGQEKKKLTNYGMQLREKQKLKRYYGVLERQFERLYEEAERMKGITGENLLQLLERRLDNVVFRLGFAASRPQARQLVSHGHIEVNGKKVDIPSFLVKPGDVISVREKSRSMELIKNNLEVSRNVPDWLELNKDAFEGRVVSLPRREHIDLPIQEHLIVELYSK.

One can recognise an S4 RNA-binding domain in the interval 98-158 (RRLDNVVFRL…EKSRSMELIK (61 aa)).

It belongs to the universal ribosomal protein uS4 family. Part of the 30S ribosomal subunit. Contacts protein S5. The interaction surface between S4 and S5 is involved in control of translational fidelity.

Functionally, one of the primary rRNA binding proteins, it binds directly to 16S rRNA where it nucleates assembly of the body of the 30S subunit. In terms of biological role, with S5 and S12 plays an important role in translational accuracy. The chain is Small ribosomal subunit protein uS4 from Thermoanaerobacter pseudethanolicus (strain ATCC 33223 / 39E) (Clostridium thermohydrosulfuricum).